Consider the following 284-residue polypeptide: uncharacterized protein (284 aa).

The protein belongs to the IIV-6 436R family.

This is an uncharacterized protein from Invertebrate iridescent virus 3 (IIV-3).